A 72-amino-acid polypeptide reads, in one-letter code: Alpha-elapitoxin-Dpp2a (72 aa).

Intrachain disulfides connect Cys3–Cys21, Cys14–Cys42, Cys27–Cys31, Cys46–Cys57, and Cys58–Cys63.

Belongs to the three-finger toxin family. Long-chain subfamily. Type II alpha-neurotoxin sub-subfamily. Expressed by the venom gland.

The protein resides in the secreted. In terms of biological role, binds with high affinity to muscular (alpha-1/CHRNA1) and neuronal (alpha-7/CHRNA7) nicotinic acetylcholine receptor (nAChR) and inhibits acetylcholine from binding to the receptor, thereby impairing neuromuscular and neuronal transmission. This Dendroaspis polylepis polylepis (Black mamba) protein is Alpha-elapitoxin-Dpp2a.